The sequence spans 211 residues: 3-demethoxyubiquinol 3-hydroxylase (211 aa).

6 residues coordinate Fe cation: glutamate 60, glutamate 90, histidine 93, glutamate 142, glutamate 174, and histidine 177.

The protein belongs to the COQ7 family. Fe cation serves as cofactor.

It localises to the cell membrane. It catalyses the reaction a 5-methoxy-2-methyl-3-(all-trans-polyprenyl)benzene-1,4-diol + AH2 + O2 = a 3-demethylubiquinol + A + H2O. The protein operates within cofactor biosynthesis; ubiquinone biosynthesis. Its function is as follows. Catalyzes the hydroxylation of 2-nonaprenyl-3-methyl-6-methoxy-1,4-benzoquinol during ubiquinone biosynthesis. This Francisella tularensis subsp. tularensis (strain FSC 198) protein is 3-demethoxyubiquinol 3-hydroxylase.